A 393-amino-acid polypeptide reads, in one-letter code: NAD(P)H-quinone oxidoreductase subunit H, chloroplastic (393 aa).

It belongs to the complex I 49 kDa subunit family. As to quaternary structure, NDH is composed of at least 16 different subunits, 5 of which are encoded in the nucleus.

It is found in the plastid. Its subcellular location is the chloroplast thylakoid membrane. The enzyme catalyses a plastoquinone + NADH + (n+1) H(+)(in) = a plastoquinol + NAD(+) + n H(+)(out). It carries out the reaction a plastoquinone + NADPH + (n+1) H(+)(in) = a plastoquinol + NADP(+) + n H(+)(out). Its function is as follows. NDH shuttles electrons from NAD(P)H:plastoquinone, via FMN and iron-sulfur (Fe-S) centers, to quinones in the photosynthetic chain and possibly in a chloroplast respiratory chain. The immediate electron acceptor for the enzyme in this species is believed to be plastoquinone. Couples the redox reaction to proton translocation, and thus conserves the redox energy in a proton gradient. The protein is NAD(P)H-quinone oxidoreductase subunit H, chloroplastic of Manihot esculenta (Cassava).